Reading from the N-terminus, the 254-residue chain is MGAVEGLTEFLPVSSTGHMILTGHLIGFDDDRAKVFEVVIQLGSILAVVVIFWKRLWSLVGIGKVTDGPSLNLLHIIIGMIPAGVLGVLFHSAIKEVLFGPGPVVISLVAGGILMIVAEKFSKPSTARTLDEITYKQAFTIGMFQCLALWPGFSRSGSTISGGLLARVSHTAAAEYTFILAVPMMVAASGLDLIKSWDILSTADIPLFATGFITAFVVAMLAIVSFLKLLSRVKLTPFAYYRFILAAVFYFFIM.

Helical transmembrane passes span 8–28 (TEFL…LIGF), 33–53 (AKVF…VIFW), 74–94 (LHII…HSAI), 97–117 (VLFG…LMIV), 133–153 (ITYK…WPGF), 174–194 (AEYT…LDLI), 207–227 (LFAT…VSFL), and 233–253 (VKLT…YFFI).

It belongs to the UppP family.

It localises to the cell membrane. The catalysed reaction is di-trans,octa-cis-undecaprenyl diphosphate + H2O = di-trans,octa-cis-undecaprenyl phosphate + phosphate + H(+). Its function is as follows. Catalyzes the dephosphorylation of undecaprenyl diphosphate (UPP). Confers resistance to bacitracin. The protein is Undecaprenyl-diphosphatase 3 of Bacillus thuringiensis (strain Al Hakam).